The sequence spans 403 residues: Cytoplasmic tRNA 2-thiolation protein 2 (403 aa).

Belongs to the CTU2/NCS2 family.

It localises to the cytoplasm. It participates in tRNA modification; 5-methoxycarbonylmethyl-2-thiouridine-tRNA biosynthesis. Plays a central role in 2-thiolation of mcm(5)S(2)U at tRNA wobble positions of tRNA(Lys), tRNA(Glu) and tRNA(Gln). May act by forming a heterodimer with NCS6/CTU1 that ligates sulfur from thiocarboxylated URM1 onto the uridine of tRNAs at wobble position. This is Cytoplasmic tRNA 2-thiolation protein 2 from Drosophila willistoni (Fruit fly).